The following is a 177-amino-acid chain: MDFKQYSPEELKECSMIEVVHSVLGDKKQATTFNELVQEIAQVLGLSQEQVNAKIAQFYTDLNIDGRFINLGENRWGLRSWYPYEQIDEEILPQPKPKKKRKVEEDGFDDYIEEDEDDFDDVDGNEDEDDDVEDLDKVLEDEDGDDDDLDDLDDDEDDFAEEELEYDETEEEEEEEL.

The HTH HARE-type domain occupies 14–81 (CSMIEVVHSV…GENRWGLRSW (68 aa)). The disordered stretch occupies residues 93-177 (PQPKPKKKRK…ETEEEEEEEL (85 aa)). The span at 106 to 177 (DGFDDYIEED…ETEEEEEEEL (72 aa)) shows a compositional bias: acidic residues.

It belongs to the RpoE family. In terms of assembly, RNAP is composed of a core of 2 alpha, a beta and a beta' subunits. The core is associated with a delta subunit and one of several sigma factors.

In terms of biological role, participates in both the initiation and recycling phases of transcription. In the presence of the delta subunit, RNAP displays an increased specificity of transcription, a decreased affinity for nucleic acids, and an increased efficiency of RNA synthesis because of enhanced recycling. This Bacillus cereus (strain AH187) protein is Probable DNA-directed RNA polymerase subunit delta.